The primary structure comprises 232 residues: Orotate phosphoribosyltransferase (232 aa).

Residues Arg107, Lys108, Lys111, and 133-141 (EDLTTDGGS) each bind 5-phospho-alpha-D-ribose 1-diphosphate. Position 137 (Thr137) interacts with orotate.

This sequence belongs to the purine/pyrimidine phosphoribosyltransferase family. PyrE subfamily. Homodimer. Mg(2+) serves as cofactor.

The enzyme catalyses orotidine 5'-phosphate + diphosphate = orotate + 5-phospho-alpha-D-ribose 1-diphosphate. Its pathway is pyrimidine metabolism; UMP biosynthesis via de novo pathway; UMP from orotate: step 1/2. Catalyzes the transfer of a ribosyl phosphate group from 5-phosphoribose 1-diphosphate to orotate, leading to the formation of orotidine monophosphate (OMP). The protein is Orotate phosphoribosyltransferase of Cereibacter sphaeroides (strain ATCC 17025 / ATH 2.4.3) (Rhodobacter sphaeroides).